We begin with the raw amino-acid sequence, 445 residues long: Phosphoglucosamine mutase (445 aa).

Residue Ser101 is the Phosphoserine intermediate of the active site. 4 residues coordinate Mg(2+): Ser101, Asp240, Asp242, and Asp244. Phosphoserine is present on Ser101.

This sequence belongs to the phosphohexose mutase family. It depends on Mg(2+) as a cofactor. In terms of processing, activated by phosphorylation.

It carries out the reaction alpha-D-glucosamine 1-phosphate = D-glucosamine 6-phosphate. Catalyzes the conversion of glucosamine-6-phosphate to glucosamine-1-phosphate. The polypeptide is Phosphoglucosamine mutase (Pseudomonas aeruginosa (strain LESB58)).